The sequence spans 239 residues: Probable transcriptional regulatory protein Pnuc_0618 (239 aa).

The interval 1-21 is disordered; sequence MAGHSKWANIQHRKGRQDEKR.

The protein belongs to the TACO1 family.

Its subcellular location is the cytoplasm. This Polynucleobacter asymbioticus (strain DSM 18221 / CIP 109841 / QLW-P1DMWA-1) (Polynucleobacter necessarius subsp. asymbioticus) protein is Probable transcriptional regulatory protein Pnuc_0618.